Consider the following 397-residue polypeptide: ATP-dependent RNA helicase RhlB (397 aa).

A Q motif motif is present at residues 8 to 36 (TRFHDFNLAPELMHAIQDLGFPYCTPIQA). Positions 39–219 (LGFTLKGKDA…KQWTTDPSIV (181 aa)) constitute a Helicase ATP-binding domain. An ATP-binding site is contributed by 52–59 (AQTGTGKT). The short motif at 165 to 168 (DEAD) is the DEAD box element. One can recognise a Helicase C-terminal domain in the interval 242–392 (DKYKLLYNLV…TPPTHLLRAV (151 aa)).

This sequence belongs to the DEAD box helicase family. RhlB subfamily. As to quaternary structure, component of the RNA degradosome, which is a multiprotein complex involved in RNA processing and mRNA degradation.

The protein resides in the cytoplasm. It carries out the reaction ATP + H2O = ADP + phosphate + H(+). Functionally, DEAD-box RNA helicase involved in RNA degradation. Has RNA-dependent ATPase activity and unwinds double-stranded RNA. The polypeptide is ATP-dependent RNA helicase RhlB (Pseudomonas syringae pv. tomato (strain ATCC BAA-871 / DC3000)).